Consider the following 146-residue polypeptide: Hemoglobin subunit beta (146 aa).

Valine 1 carries the post-translational modification N-acetylvaline. Positions histidine 2–histidine 146 constitute a Globin domain. Threonine 12 bears the Phosphothreonine mark. A Phosphoserine modification is found at serine 44. At lysine 59 the chain carries N6-acetyllysine. Residue histidine 63 coordinates heme b. Lysine 82 carries the N6-acetyllysine modification. Heme b is bound at residue histidine 92. Cysteine 93 is subject to S-nitrosocysteine. Lysine 144 carries the post-translational modification N6-acetyllysine.

This sequence belongs to the globin family. Heterotetramer of two alpha chains and two beta chains. In terms of tissue distribution, red blood cells.

Functionally, involved in oxygen transport from the lung to the various peripheral tissues. The chain is Hemoglobin subunit beta (HBB) from Ctenodactylus gundi (Northern gundi).